Here is a 231-residue protein sequence, read N- to C-terminus: Casparian strip membrane protein 1 (231 aa).

Topologically, residues 1–69 (MSTSETATVI…FRQSDRGSRC (69 aa)) are cytoplasmic. The chain crosses the membrane as a helical span at residues 70–90 (LAFLDFLLRIAAFGPALAAAI). Residues 91–117 (ATGTSDETLSVFTEFFQFRARFDDFPA) are Extracellular-facing. The helical transmembrane segment at 118 to 138 (FLFLMVANAIAAGYLVLSLPF) threads the bilayer. At 139–152 (SAVVVLRPQATGLR) the chain is on the cytoplasmic side. The helical transmembrane segment at 153-173 (LLLLVCDTIMIGLLTAAAAAA) threads the bilayer. At 174–207 (AAIVELAHNGNERANWVAICMQFHGFCQRTSGAV) the chain is on the extracellular side. A helical transmembrane segment spans residues 208-228 (VASFLSVFLFLLLVVLAAFAI). The Cytoplasmic portion of the chain corresponds to 229–231 (RKR).

This sequence belongs to the Casparian strip membrane proteins (CASP) family. In terms of assembly, homodimer and heterodimers.

The protein localises to the cell membrane. Regulates membrane-cell wall junctions and localized cell wall deposition. Required for establishment of the Casparian strip membrane domain (CSD) and the subsequent formation of Casparian strips, a cell wall modification of the root endodermis that determines an apoplastic barrier between the intraorganismal apoplasm and the extraorganismal apoplasm and prevents lateral diffusion. The protein is Casparian strip membrane protein 1 of Brachypodium distachyon (Purple false brome).